The primary structure comprises 491 residues: Chromosomal replication initiator protein DnaA (491 aa).

Positions 1–69 (MTTWDKCLKK…TIQECHGNDL (69 aa)) are domain I, interacts with DnaA modulators. Positions 69-154 (LIIEYSNKKF…KEDEEYSFGL (86 aa)) are domain II. Residues 155-371 (PLKEKYVFDS…GALNRVLTTS (217 aa)) are domain III, AAA+ region. ATP is bound by residues Gly199, Gly201, Lys202, and Thr203. Residues 372–491 (KFNHKDPTIE…YELLLDKISR (120 aa)) are domain IV, binds dsDNA.

The protein belongs to the DnaA family. In terms of assembly, oligomerizes as a right-handed, spiral filament on DNA at oriC.

Its subcellular location is the cytoplasm. Functionally, plays an essential role in the initiation and regulation of chromosomal replication. ATP-DnaA binds to the origin of replication (oriC) to initiate formation of the DNA replication initiation complex once per cell cycle. Binds the DnaA box (a 9 base pair repeat at the origin) and separates the double-stranded (ds)DNA. Forms a right-handed helical filament on oriC DNA; dsDNA binds to the exterior of the filament while single-stranded (ss)DNA is stabiized in the filament's interior. The ATP-DnaA-oriC complex binds and stabilizes one strand of the AT-rich DNA unwinding element (DUE), permitting loading of DNA polymerase. After initiation quickly degrades to an ADP-DnaA complex that is not apt for DNA replication. Binds acidic phospholipids. This is Chromosomal replication initiator protein DnaA from Francisella tularensis subsp. holarctica (strain LVS).